A 136-amino-acid chain; its full sequence is Large ribosomal subunit protein uL16c (136 aa).

The protein belongs to the universal ribosomal protein uL16 family. Part of the 50S ribosomal subunit.

Its subcellular location is the plastid. The protein resides in the chloroplast. This is Large ribosomal subunit protein uL16c from Buxus microphylla (Littleleaf boxwood).